The primary structure comprises 446 residues: Protein odr-4 homolog (446 aa).

A helical membrane pass occupies residues A76 to T96. Residues H394–A415 are compositionally biased toward basic and acidic residues. The interval H394 to S417 is disordered. Residues G426–M446 traverse the membrane as a helical segment.

The protein belongs to the ODR-4 family.

It localises to the membrane. May play a role in the trafficking of a subset of G-protein coupled receptors. The protein is Protein odr-4 homolog (odr4) of Xenopus laevis (African clawed frog).